Reading from the N-terminus, the 73-residue chain is Bacterioferritin-associated ferredoxin (73 aa).

Positions 4 and 6 each coordinate [2Fe-2S] cluster. 2 residues coordinate phosphate: Arg-26 and Arg-29. Residues Cys-38 and Cys-41 each contribute to the [2Fe-2S] cluster site. Lys-46 provides a ligand contact to phosphate.

This sequence belongs to the Bfd family. In terms of assembly, monomer. Interacts with BfrB; up to 12 Bfd proteins can bind to the BfrB bacterioferritin complex (BFR). One Bfd protein binds to a BfrB dimer in the BFR, with the [2Fe-2S] cluster positioned about 22 Angstroms above the heme of BfrB. Does not interact with FtnA. Requires [2Fe-2S] cluster as cofactor. The cofactor is phosphate.

Its function is as follows. Required for mobilization of iron from the bacterioferritin (BFR) complex, composed of BfrB and FtnA in varying proportions; mobilization requires the [2Fe-2S] cluster of this protein. Reduction of the BfrB heme group occurs in the presence of Bfd, strongly suggesting that the BfrB-Bfd complex allows heme to mediate electron transfer from FPR to the Fe(3+) iron core in the BFR prior to its release as Fe(2+). This is Bacterioferritin-associated ferredoxin from Pseudomonas aeruginosa (strain ATCC 15692 / DSM 22644 / CIP 104116 / JCM 14847 / LMG 12228 / 1C / PRS 101 / PAO1).